The sequence spans 147 residues: Large ribosomal subunit protein uL13 (147 aa).

Belongs to the universal ribosomal protein uL13 family. Part of the 50S ribosomal subunit.

This protein is one of the early assembly proteins of the 50S ribosomal subunit, although it is not seen to bind rRNA by itself. It is important during the early stages of 50S assembly. The sequence is that of Large ribosomal subunit protein uL13 from Streptomyces avermitilis (strain ATCC 31267 / DSM 46492 / JCM 5070 / NBRC 14893 / NCIMB 12804 / NRRL 8165 / MA-4680).